We begin with the raw amino-acid sequence, 184 residues long: ATP synthase subunit b, chloroplastic (184 aa).

Residues 31–53 traverse the membrane as a helical segment; sequence LINLGIVISLLIYFGKGVLSNLL.

It belongs to the ATPase B chain family. In terms of assembly, F-type ATPases have 2 components, F(1) - the catalytic core - and F(0) - the membrane proton channel. F(1) has five subunits: alpha(3), beta(3), gamma(1), delta(1), epsilon(1). F(0) has four main subunits: a(1), b(1), b'(1) and c(10-14). The alpha and beta chains form an alternating ring which encloses part of the gamma chain. F(1) is attached to F(0) by a central stalk formed by the gamma and epsilon chains, while a peripheral stalk is formed by the delta, b and b' chains.

The protein localises to the plastid. Its subcellular location is the chloroplast thylakoid membrane. Its function is as follows. F(1)F(0) ATP synthase produces ATP from ADP in the presence of a proton or sodium gradient. F-type ATPases consist of two structural domains, F(1) containing the extramembraneous catalytic core and F(0) containing the membrane proton channel, linked together by a central stalk and a peripheral stalk. During catalysis, ATP synthesis in the catalytic domain of F(1) is coupled via a rotary mechanism of the central stalk subunits to proton translocation. In terms of biological role, component of the F(0) channel, it forms part of the peripheral stalk, linking F(1) to F(0). The polypeptide is ATP synthase subunit b, chloroplastic (Aneura mirabilis (Parasitic liverwort)).